Consider the following 714-residue polypeptide: Structure-specific endonuclease subunit SLX4 2 (714 aa).

Composition is skewed to basic and acidic residues over residues 1-14 and 24-34; these read MSPE…EDNL and IHEETLAEESH. Disordered stretches follow at residues 1–114 and 338–369; these read MSPE…EQQG and SSGP…KTPQ. Residues 36–46 show a composition bias toward polar residues; that stretch reads QAIQRSISRLS. The span at 79–92 shows a compositional bias: basic residues; the sequence is KTKKRKLKVSKPRK.

The protein belongs to the SLX4 family. Forms a heterodimer with SLX1. Phosphorylated in response to DNA damage.

It is found in the nucleus. In terms of biological role, regulatory subunit of the SLX1-SLX4 structure-specific endonuclease that resolves DNA secondary structures generated during DNA repair and recombination. Has endonuclease activity towards branched DNA substrates, introducing single-strand cuts in duplex DNA close to junctions with ss-DNA. The chain is Structure-specific endonuclease subunit SLX4 2 from Candida tropicalis (strain ATCC MYA-3404 / T1) (Yeast).